Here is a 208-residue protein sequence, read N- to C-terminus: Small ribosomal subunit protein uS4 (208 aa).

One can recognise an S4 RNA-binding domain in the interval 98-159; the sequence is LRLDNVAYRL…AARTHIRIAA (62 aa).

The protein belongs to the universal ribosomal protein uS4 family. In terms of assembly, part of the 30S ribosomal subunit. Contacts protein S5. The interaction surface between S4 and S5 is involved in control of translational fidelity.

Its function is as follows. One of the primary rRNA binding proteins, it binds directly to 16S rRNA where it nucleates assembly of the body of the 30S subunit. With S5 and S12 plays an important role in translational accuracy. The polypeptide is Small ribosomal subunit protein uS4 (Acidithiobacillus ferrooxidans (strain ATCC 23270 / DSM 14882 / CIP 104768 / NCIMB 8455) (Ferrobacillus ferrooxidans (strain ATCC 23270))).